Consider the following 184-residue polypeptide: Large ribosomal subunit protein uL22 (184 aa).

The interval 160-184 (PEEEVAQKKKISQKKLKKQKLMARE) is disordered. Basic residues predominate over residues 167-184 (KKKISQKKLKKQKLMARE).

Belongs to the universal ribosomal protein uL22 family. As to quaternary structure, component of the large ribosomal subunit.

The protein resides in the cytoplasm. In terms of biological role, component of the large ribosomal subunit. The ribosome is a large ribonucleoprotein complex responsible for the synthesis of proteins in the cell. The chain is Large ribosomal subunit protein uL22 (RPL17) from Bos taurus (Bovine).